A 347-amino-acid chain; its full sequence is NADH-ubiquinone oxidoreductase chain 2 (347 aa).

Helical transmembrane passes span 1-21 (MNPL…LITA), 25-45 (HWFL…PVLT), 55-75 (AAIK…MAIL), 96-116 (LMIL…FWVP), 123-143 (TLTS…SIMY), 145-165 (IFPV…IMVG), 178-198 (ILAY…PYNP), 199-219 (NITI…FLAL), 237-257 (LTWL…LPPL), 274-294 (GTLI…YFYM), and 324-344 (LLLP…PLTF).

This sequence belongs to the complex I subunit 2 family. Core subunit of respiratory chain NADH dehydrogenase (Complex I) which is composed of 45 different subunits. Interacts with TMEM242.

Its subcellular location is the mitochondrion inner membrane. It carries out the reaction a ubiquinone + NADH + 5 H(+)(in) = a ubiquinol + NAD(+) + 4 H(+)(out). Its function is as follows. Core subunit of the mitochondrial membrane respiratory chain NADH dehydrogenase (Complex I) which catalyzes electron transfer from NADH through the respiratory chain, using ubiquinone as an electron acceptor. Essential for the catalytic activity and assembly of complex I. In Symphalangus syndactylus (Siamang), this protein is NADH-ubiquinone oxidoreductase chain 2.